Consider the following 227-residue polypeptide: Cytidylate kinase (227 aa).

Position 12-20 (12-20 (GPSGAGKGT)) interacts with ATP.

The protein belongs to the cytidylate kinase family. Type 1 subfamily.

The protein localises to the cytoplasm. It carries out the reaction CMP + ATP = CDP + ADP. The catalysed reaction is dCMP + ATP = dCDP + ADP. This is Cytidylate kinase from Enterobacter sp. (strain 638).